The sequence spans 606 residues: Maternal effect protein oskar (606 aa).

In terms of domain architecture, HTH OST-type spans 152-221; it reads EYPDIDSEVR…SGKRIFNLKA (70 aa). A phosphoserine mark is found at Ser270 and Ser275. The leucine-zipper stretch occupies residues 425–439; it reads LMGDDFMLYLARMEL.

Interacts with smaug (smg). In terms of assembly, interacts with yl/yolkless. In terms of tissue distribution, begins to accumulate at the posterior pole of the oocyte from stage 8 onwards.

It is found in the endosome. Functionally, organizes the germ plasm and directs localization of the posterior determinant nanos. Oskar protein is required to keep nanos (nos) RNA and staufen protein at the posterior pole. The chain is Maternal effect protein oskar (osk) from Drosophila melanogaster (Fruit fly).